A 373-amino-acid chain; its full sequence is Arfaptin-1 (373 aa).

The tract at residues 1–47 is disordered; the sequence is MAQESPKNSAAEIPVTSNGEVDDSREHSFNRDLKHSLPSGLGLSETQ. Alanine 2 is subject to N-acetylalanine. 7 positions are modified to phosphoserine: serine 5, serine 28, serine 36, serine 39, serine 69, serine 79, and serine 132. Over residues 22–35 the composition is skewed to basic and acidic residues; the sequence is DDSREHSFNRDLKH. One can recognise an AH domain in the interval 153 to 353; that stretch reads TVDLELEAQI…NQKQLEQTLK (201 aa). Threonine 361 carries the phosphothreonine modification.

In terms of assembly, forms homodimers or heterodimers with ARFIP2. Interacts with non-myristoylated GTP-bound ARF3, but not to GDP-bound ARF3. Interacts with ARF1. Binds with lower affinity to ARF5 and with very little affinity to ARF6. Interacts with ARL1. Interacts with ATG9A. Phosphorylated by PRKD1; phosphorylation delocalizes ARFIP1 from the Golgi and disrupts its ability to inhibit the activity of ADP-ribosylation factor, an important component of the vesicle scission machinery. As to expression, ubiquitously expressed. Higher levels in liver, pancreas, placenta, skeletal muscle and heart.

The protein resides in the golgi apparatus. Its subcellular location is the trans-Golgi network membrane. Plays a role in controlling biogenesis of secretory granules at the trans-Golgi network. Mechanistically, binds ARF-GTP at the neck of a growing secretory granule precursor and forms a protective scaffold. Once the granule precursor has been completely loaded, active PRKD1 phosphorylates ARFIP1 and releases it from ARFs. In turn, ARFs induce fission. Through this mechanism, ensures proper secretory granule formation at the Golgi of pancreatic beta cells. In Homo sapiens (Human), this protein is Arfaptin-1.